The sequence spans 113 residues: Large ribosomal subunit protein bL19 (113 aa).

The protein belongs to the bacterial ribosomal protein bL19 family.

This protein is located at the 30S-50S ribosomal subunit interface and may play a role in the structure and function of the aminoacyl-tRNA binding site. This is Large ribosomal subunit protein bL19 from Corynebacterium kroppenstedtii (strain DSM 44385 / JCM 11950 / CIP 105744 / CCUG 35717).